Consider the following 253-residue polypeptide: MLLIPAIDLKDGHCVRLEQGDMDKATVFSEDPGAMAAHWISKGARCLHLVDLNGAFAGKLKNESAIKSILKAVGDEIPVQLGGGIRDLETIERLLDDGISTVIIGTAAVKNPGFVQDACTAFPGHVMVGLDARDGKVATDGWSKITCHKVIDLAKKFEDWGVEAIIYTDIGRDGMLKGVNIDATVKLAQAIRIPVIASGGLSNNQDIDALCKAEEEGVMGVIAGRSIYASDLDLAAAQKYADELTLKYKKKTN.

D8 serves as the catalytic Proton acceptor. D131 functions as the Proton donor in the catalytic mechanism.

It belongs to the HisA/HisF family.

It is found in the cytoplasm. It catalyses the reaction 1-(5-phospho-beta-D-ribosyl)-5-[(5-phospho-beta-D-ribosylamino)methylideneamino]imidazole-4-carboxamide = 5-[(5-phospho-1-deoxy-D-ribulos-1-ylimino)methylamino]-1-(5-phospho-beta-D-ribosyl)imidazole-4-carboxamide. It functions in the pathway amino-acid biosynthesis; L-histidine biosynthesis; L-histidine from 5-phospho-alpha-D-ribose 1-diphosphate: step 4/9. This is 1-(5-phosphoribosyl)-5-[(5-phosphoribosylamino)methylideneamino] imidazole-4-carboxamide isomerase from Polynucleobacter necessarius subsp. necessarius (strain STIR1).